Consider the following 339-residue polypeptide: Ferrochelatase (339 aa).

Fe cation is bound by residues histidine 202 and glutamate 283.

It belongs to the ferrochelatase family.

It is found in the cytoplasm. It carries out the reaction heme b + 2 H(+) = protoporphyrin IX + Fe(2+). Its pathway is porphyrin-containing compound metabolism; protoheme biosynthesis; protoheme from protoporphyrin-IX: step 1/1. Its function is as follows. Catalyzes the ferrous insertion into protoporphyrin IX. The protein is Ferrochelatase of Psychrobacter sp. (strain PRwf-1).